The sequence spans 245 residues: Orotidine 5'-phosphate decarboxylase (245 aa).

Substrate is bound by residues Asp22, Lys44, 71–80 (DLKFHDIPNT), Thr131, Arg192, Gln201, Gly221, and Arg222. Catalysis depends on Lys73, which acts as the Proton donor.

Belongs to the OMP decarboxylase family. Type 1 subfamily. Homodimer.

It catalyses the reaction orotidine 5'-phosphate + H(+) = UMP + CO2. It functions in the pathway pyrimidine metabolism; UMP biosynthesis via de novo pathway; UMP from orotate: step 2/2. In terms of biological role, catalyzes the decarboxylation of orotidine 5'-monophosphate (OMP) to uridine 5'-monophosphate (UMP). The sequence is that of Orotidine 5'-phosphate decarboxylase from Escherichia coli (strain K12 / MC4100 / BW2952).